A 246-amino-acid polypeptide reads, in one-letter code: Bis(5'-nucleosyl)-tetraphosphatase PrpE [asymmetrical] (246 aa).

Belongs to the PrpE family. Ni(2+) is required as a cofactor.

It carries out the reaction P(1),P(4)-bis(5'-guanosyl) tetraphosphate + H2O = GMP + GTP + 2 H(+). Asymmetrically hydrolyzes Ap4p to yield AMP and ATP. In Bacillus mycoides (strain KBAB4) (Bacillus weihenstephanensis), this protein is Bis(5'-nucleosyl)-tetraphosphatase PrpE [asymmetrical].